Reading from the N-terminus, the 296-residue chain is Putative peptide transport system permease protein BruAb2_1032 (296 aa).

6 consecutive transmembrane segments (helical) span residues I35–N55, L97–A117, V131–L151, I205–I225, A229–V249, and W260–I280. One can recognise an ABC transmembrane type-1 domain in the interval L97 to G281.

This sequence belongs to the binding-protein-dependent transport system permease family. As to quaternary structure, the complex is composed of two ATP-binding proteins (BruAb2_1033 and BruAb2_1034), two transmembrane proteins (BruAb2_1031 and BruAb2_1032) and a solute-binding protein (BruAb2_1030).

The protein resides in the cell inner membrane. Its function is as follows. Probably part of an ABC transporter complex that could be involved in peptide import. Probably responsible for the translocation of the substrate across the membrane. In Brucella abortus biovar 1 (strain 9-941), this protein is Putative peptide transport system permease protein BruAb2_1032.